Here is a 400-residue protein sequence, read N- to C-terminus: MLARRKPVLPALTINPAIAEGPSPTSEGASEANLVDLQKKLAELELDEQQKKRLEAFLTQKAKVGELKDDDFERISELGAGNGGVVTKVQHRPSGLIMARKLIHLEIKPAIRNQIIRELQVLHECNSPYIVGFYGAFYSDGEISICMEHMDGGSLDQVLKEAKRIPEEILGKVSIAVLRGLAYLREKHQIMHRDVKPSNILVNSRGEIKLCDFGVSGQLIDSMANSFVGTRSYMSPERLQGTHYSVQSDIWSMGLSLVELSIGRYPIPPPDAKELEAIFGRPMVDGIEGEPHSISPRPRPPGRPISGHGTDSRPAMAIFELLDYIVNEPPPKLPNGVFTQDFQEFVNKCLIKNPAERADLKMLMSHTFIKRSEVEEVDFAGWLCKTLRLNQPSTPTRTAV.

N-acetylmethionine is present on Met-1. At Ser-23 the chain carries Phosphoserine. One can recognise a Protein kinase domain in the interval 72-369 (FERISELGAG…LKMLMSHTFI (298 aa)). ATP is bound by residues 78 to 86 (LGAGNGGVV) and Lys-101. Asp-194 functions as the Proton acceptor in the catalytic mechanism. Ser-222 is modified (phosphoserine; by RAF). Phosphoserine occurs at positions 226, 293, 295, and 306. The tract at residues 288-309 (EGEPHSISPRPRPPGRPISGHG) is disordered. A phosphothreonine mark is found at Thr-394 and Thr-396.

This sequence belongs to the protein kinase superfamily. STE Ser/Thr protein kinase family. MAP kinase kinase subfamily. As to quaternary structure, interacts with MORG1. Interacts with SGK1. Interacts with KSR1. Interacts with KSR1 and BRAF; the interaction with KSR1 mediates KSR1-BRAF dimerization. Interacts with GLS. Requires Mg(2+) as cofactor. MAPKK is itself dependent on Ser/Thr phosphorylation for activity catalyzed by MAP kinase kinase kinases (RAF or MEKK1).

The protein resides in the cytoplasm. It is found in the membrane. It carries out the reaction L-seryl-[protein] + ATP = O-phospho-L-seryl-[protein] + ADP + H(+). The enzyme catalyses L-threonyl-[protein] + ATP = O-phospho-L-threonyl-[protein] + ADP + H(+). The catalysed reaction is L-tyrosyl-[protein] + ATP = O-phospho-L-tyrosyl-[protein] + ADP + H(+). In terms of biological role, catalyzes the concomitant phosphorylation of a threonine and a tyrosine residue in a Thr-Glu-Tyr sequence located in MAP kinases. Activates the ERK1 and ERK2 MAP kinases. Activates BRAF in a KSR1 or KSR2-dependent manner; by binding to KSR1 or KSR2 releases the inhibitory intramolecular interaction between KSR1 or KSR2 protein kinase and N-terminal domains which promotes KSR1 or KSR2-BRAF dimerization and BRAF activation. The protein is Dual specificity mitogen-activated protein kinase kinase 2 (MAP2K2) of Canis lupus familiaris (Dog).